Consider the following 290-residue polypeptide: uncharacterized protein (290 aa).

NAD(+)-binding positions include 7 to 21 (AVFG…MAQN) and T100. K175 is an active-site residue. K243 provides a ligand contact to NAD(+).

The protein belongs to the HIBADH-related family.

This is an uncharacterized protein from Synechocystis sp. (strain ATCC 27184 / PCC 6803 / Kazusa).